Reading from the N-terminus, the 1172-residue chain is DNA-directed RNA polymerase subunit beta (1172 aa).

It belongs to the RNA polymerase beta chain family. As to quaternary structure, the RNAP catalytic core consists of 2 alpha, 1 beta, 1 beta' and 1 omega subunit. When a sigma factor is associated with the core the holoenzyme is formed, which can initiate transcription.

The enzyme catalyses RNA(n) + a ribonucleoside 5'-triphosphate = RNA(n+1) + diphosphate. In terms of biological role, DNA-dependent RNA polymerase catalyzes the transcription of DNA into RNA using the four ribonucleoside triphosphates as substrates. In Mycobacterium sp. (strain JLS), this protein is DNA-directed RNA polymerase subunit beta.